The primary structure comprises 138 residues: Beta-lactamase HcpB (138 aa).

TPR repeat units follow at residues 1 to 28, 57 to 94, and 97 to 130; these read MVGG…NEMF, GNGC…NDQD, and LILG…GSED. 4 disulfide bridges follow: Cys22–Cys30, Cys52–Cys60, Cys88–Cys96, and Cys124–Cys132.

This sequence belongs to the hcp beta-lactamase family.

It carries out the reaction a beta-lactam + H2O = a substituted beta-amino acid. In terms of biological role, hydrolyzes 6-aminopenicillinic acid and 7-aminocephalosporanic acid (ACA) derivatives. The protein is Beta-lactamase HcpB (hcpB) of Helicobacter pylori (strain ATCC 700392 / 26695) (Campylobacter pylori).